The primary structure comprises 289 residues: ATP synthase gamma chain (289 aa).

The protein belongs to the ATPase gamma chain family. In terms of assembly, F-type ATPases have 2 components, CF(1) - the catalytic core - and CF(0) - the membrane proton channel. CF(1) has five subunits: alpha(3), beta(3), gamma(1), delta(1), epsilon(1). CF(0) has three main subunits: a, b and c.

The protein localises to the cell inner membrane. Functionally, produces ATP from ADP in the presence of a proton gradient across the membrane. The gamma chain is believed to be important in regulating ATPase activity and the flow of protons through the CF(0) complex. The sequence is that of ATP synthase gamma chain from Cereibacter sphaeroides (strain ATCC 17023 / DSM 158 / JCM 6121 / CCUG 31486 / LMG 2827 / NBRC 12203 / NCIMB 8253 / ATH 2.4.1.) (Rhodobacter sphaeroides).